Consider the following 177-residue polypeptide: Large ribosomal subunit protein uL30 (177 aa).

Belongs to the universal ribosomal protein uL30 family. Part of the 50S ribosomal subunit.

The protein is Large ribosomal subunit protein uL30 of Pyrobaculum islandicum (strain DSM 4184 / JCM 9189 / GEO3).